Reading from the N-terminus, the 258-residue chain is Thiazole synthase (258 aa).

Lys98 acts as the Schiff-base intermediate with DXP in catalysis. 1-deoxy-D-xylulose 5-phosphate-binding positions include Gly159, 185-186 (AG), and 207-208 (NT).

This sequence belongs to the ThiG family. As to quaternary structure, homotetramer. Forms heterodimers with either ThiH or ThiS.

The protein localises to the cytoplasm. The catalysed reaction is [ThiS sulfur-carrier protein]-C-terminal-Gly-aminoethanethioate + 2-iminoacetate + 1-deoxy-D-xylulose 5-phosphate = [ThiS sulfur-carrier protein]-C-terminal Gly-Gly + 2-[(2R,5Z)-2-carboxy-4-methylthiazol-5(2H)-ylidene]ethyl phosphate + 2 H2O + H(+). It participates in cofactor biosynthesis; thiamine diphosphate biosynthesis. Functionally, catalyzes the rearrangement of 1-deoxy-D-xylulose 5-phosphate (DXP) to produce the thiazole phosphate moiety of thiamine. Sulfur is provided by the thiocarboxylate moiety of the carrier protein ThiS. In vitro, sulfur can be provided by H(2)S. In Bacillus cereus (strain ATCC 14579 / DSM 31 / CCUG 7414 / JCM 2152 / NBRC 15305 / NCIMB 9373 / NCTC 2599 / NRRL B-3711), this protein is Thiazole synthase.